Here is a 375-residue protein sequence, read N- to C-terminus: Succinyl-diaminopimelate desuccinylase (375 aa).

His66 is a Zn(2+) binding site. The active site involves Asp68. Asp99 contacts Zn(2+). Glu133 functions as the Proton acceptor in the catalytic mechanism. The Zn(2+) site is built by Glu134, Glu162, and His348.

The protein belongs to the peptidase M20A family. DapE subfamily. As to quaternary structure, homodimer. The cofactor is Zn(2+). It depends on Co(2+) as a cofactor.

It carries out the reaction N-succinyl-(2S,6S)-2,6-diaminopimelate + H2O = (2S,6S)-2,6-diaminopimelate + succinate. It functions in the pathway amino-acid biosynthesis; L-lysine biosynthesis via DAP pathway; LL-2,6-diaminopimelate from (S)-tetrahydrodipicolinate (succinylase route): step 3/3. Its function is as follows. Catalyzes the hydrolysis of N-succinyl-L,L-diaminopimelic acid (SDAP), forming succinate and LL-2,6-diaminopimelate (DAP), an intermediate involved in the bacterial biosynthesis of lysine and meso-diaminopimelic acid, an essential component of bacterial cell walls. This Aeromonas salmonicida (strain A449) protein is Succinyl-diaminopimelate desuccinylase.